Reading from the N-terminus, the 430-residue chain is Glutamine synthetase leaf isozyme, chloroplastic (430 aa).

The N-terminal 49 residues, 1–49, are a transit peptide targeting the chloroplast; sequence MAQILAPSTQWQMRITKTSPCATPITSKMWSSLVMKQTKKVAHSAKFRV. Residues 77–157 form the GS beta-grasp domain; that stretch reads IIAEYIWIGG…VVCDAYTPAG (81 aa). The interval 99–119 is disordered; sequence SKPVSHPSEVPKWNYDGSSTG. The GS catalytic domain maps to 161–430; that stretch reads PTNKRHRAAE…LAAQKIALKV (270 aa).

Belongs to the glutamine synthetase family. As to quaternary structure, homooctamer.

It is found in the plastid. It localises to the chloroplast. It catalyses the reaction L-glutamate + NH4(+) + ATP = L-glutamine + ADP + phosphate + H(+). In terms of biological role, the light-modulated chloroplast enzyme, encoded by a nuclear gene and expressed primarily in leaves, is responsible for the reassimilation of the ammonia generated by photorespiration. The protein is Glutamine synthetase leaf isozyme, chloroplastic (GS2) of Pisum sativum (Garden pea).